The sequence spans 402 residues: Tryptophan synthase beta chain 2 (402 aa).

An N6-(pyridoxal phosphate)lysine modification is found at K97.

Belongs to the TrpB family. As to quaternary structure, tetramer of two alpha and two beta chains. Requires pyridoxal 5'-phosphate as cofactor.

The catalysed reaction is (1S,2R)-1-C-(indol-3-yl)glycerol 3-phosphate + L-serine = D-glyceraldehyde 3-phosphate + L-tryptophan + H2O. Its pathway is amino-acid biosynthesis; L-tryptophan biosynthesis; L-tryptophan from chorismate: step 5/5. The beta subunit is responsible for the synthesis of L-tryptophan from indole and L-serine. This Wolinella succinogenes (strain ATCC 29543 / DSM 1740 / CCUG 13145 / JCM 31913 / LMG 7466 / NCTC 11488 / FDC 602W) (Vibrio succinogenes) protein is Tryptophan synthase beta chain 2 (trpB2).